A 178-amino-acid polypeptide reads, in one-letter code: Large ribosomal subunit protein uL6 (178 aa).

It belongs to the universal ribosomal protein uL6 family. In terms of assembly, part of the 50S ribosomal subunit.

Its function is as follows. This protein binds to the 23S rRNA, and is important in its secondary structure. It is located near the subunit interface in the base of the L7/L12 stalk, and near the tRNA binding site of the peptidyltransferase center. The sequence is that of Large ribosomal subunit protein uL6 from Corynebacterium glutamicum (strain R).